A 143-amino-acid chain; its full sequence is Nucleoside diphosphate kinase (143 aa).

Lys-11, Phe-59, Arg-87, Thr-93, Arg-104, and Asn-114 together coordinate ATP. His-117 functions as the Pros-phosphohistidine intermediate in the catalytic mechanism.

Belongs to the NDK family. In terms of assembly, homotetramer. Mg(2+) serves as cofactor.

The protein localises to the cytoplasm. It catalyses the reaction a 2'-deoxyribonucleoside 5'-diphosphate + ATP = a 2'-deoxyribonucleoside 5'-triphosphate + ADP. The enzyme catalyses a ribonucleoside 5'-diphosphate + ATP = a ribonucleoside 5'-triphosphate + ADP. Major role in the synthesis of nucleoside triphosphates other than ATP. The ATP gamma phosphate is transferred to the NDP beta phosphate via a ping-pong mechanism, using a phosphorylated active-site intermediate. The protein is Nucleoside diphosphate kinase of Shewanella sp. (strain ANA-3).